The sequence spans 874 residues: MEVLREKVEEEEEAEREEAAERAEWARMEKMMRPVEVRKEENTLKQETLRDLEKKLSEIQITVSAELPAFTKDTIDISKLPVSYKTNTPKEEHLLQVADNFSCQYSHLCPDRVPLFLHPLNECEVPKFVSTTLRPTLMPYPELYNWDSCAQFVSDFLTMVPLPDPLKPPSHLYSSTTVLKYQKGNCFDFSTLLCSMLIGSGYDAYCVNGYGSLDLCHMDLTREVCPLTVKPKETIKKEEKVLPKKYTIKPPRDLCSRFEQEQEVKKQQEIRAQEKKRLREEEERLMEAEKAKPDALHGLRVHSWVLVLSGKREVPENFFIDPFTGHSYSTQDEHFLGIESLWNHKNYWINMQDCWNCCKDLIFDLGDPVRWEYMLLGTDKSQLSLTEEDDSGINDEDDVENLGKEDEDKSFDMPHSWVEQIEISPEAFETRCPNGKKVIQYKRAKLEKWAPYLNSNGLVSRLTTYEDLQCTNILEIKEWYQNREDMLELKHINKTTDLKTDYFKPGHPQALRVHSYKSMQPEMDRVIEFYETARVDGLMKREETPRTMTEYYQGRPDFLSYRHASFGPRVKKLTLSSAESNPRPIVKITERFFRNPAKPAEEDVAERVFLVAEERIQLRYHCREDHITASKREFLRRTEVDSKGNKIIMTPDMCISFEVEPMEHTKKLLYQYEAMMHLKREEKLSRHQVWESELEVLEILKLREEEEAAHTLTISIYDTKRNEKSKEYREAMERMMHEEHLRQVETQLDYLAPFLAQLPPGEKLTRWQAVRLKDECLSDFKQRLINKANLIQARFEKETQELQKKQQWYQENQVTLTPEDEDLYLSYCSQAMFRIRILEQRLNRHKELAPLKYLALEEKLYKDPRLGELQKIFA.

Residues 1–20 (MEVLREKVEEEEEAEREEAA) form a disordered region. Coiled coils occupy residues 1–67 (MEVL…SAEL) and 257–297 (RFEQ…DALH). The span at 386–400 (TEEDDSGINDEDDVE) shows a compositional bias: acidic residues. Positions 386–410 (TEEDDSGINDEDDVENLGKEDEDKS) are disordered. Residues 401–410 (NLGKEDEDKS) show a composition bias toward basic and acidic residues.

It belongs to the DRC7 family. In terms of assembly, component of the nexin-dynein regulatory complex (N-DRC). Interacts with TCTE1/DRC5. Interacts with DRC3 and GAS8/DRC4. In terms of tissue distribution, expressed in the testis.

Its subcellular location is the cell projection. It localises to the cilium. It is found in the flagellum. The protein localises to the cytoplasm. The protein resides in the cytoskeleton. Its subcellular location is the cilium axoneme. It localises to the flagellum axoneme. Its function is as follows. Component of the nexin-dynein regulatory complex (N-DRC) a key regulator of ciliary/flagellar motility which maintains the alignment and integrity of the distal axoneme and regulates microtubule sliding in motile axonemes. Involved in the regulation of flagellar motility. Essential for male fertility, sperm head morphogenesis and sperm flagellum formation. This chain is Dynein regulatory complex subunit 7 (DRC7), found in Pan troglodytes (Chimpanzee).